Reading from the N-terminus, the 404-residue chain is Translation initiation factor eIF2B subunit gamma (404 aa).

This sequence belongs to the eIF-2B gamma/epsilon subunits family. As to quaternary structure, component of the translation initiation factor 2B (eIF2B) complex which is a heterodecamer of two sets of five different subunits: alpha, beta, gamma, delta and epsilon. Subunits alpha, beta and delta comprise a regulatory subcomplex and subunits epsilon and gamma comprise a catalytic subcomplex. Within the complex, the hexameric regulatory complex resides at the center, with the two heterodimeric catalytic subcomplexes bound on opposite sides.

It localises to the cytoplasm. The protein localises to the cytosol. Acts as a component of the translation initiation factor 2B (eIF2B) complex, which catalyzes the exchange of GDP for GTP on the eukaryotic initiation factor 2 (eIF2) complex gamma subunit. Its guanine nucleotide exchange factor activity is repressed when bound to eIF2 complex phosphorylated on the alpha subunit, thereby limiting the amount of methionyl-initiator methionine tRNA available to the ribosome and consequently global translation is repressed. The sequence is that of Translation initiation factor eIF2B subunit gamma from Caenorhabditis elegans.